A 360-amino-acid chain; its full sequence is D-alanine--D-alanine ligase (360 aa).

The ATP-grasp domain maps to 139-344 (KDVFAQAGLA…YPELIEKLVS (206 aa)). 172 to 227 (EQVLGYPCFVKPANMGSSVGISKCRSKEELQTAFDLAFQYDRRVVVEEGVVGREIE) serves as a coordination point for ATP. Mg(2+) contacts are provided by Asp298, Glu311, and Asn313.

It belongs to the D-alanine--D-alanine ligase family. Mg(2+) serves as cofactor. Mn(2+) is required as a cofactor.

Its subcellular location is the cytoplasm. It carries out the reaction 2 D-alanine + ATP = D-alanyl-D-alanine + ADP + phosphate + H(+). Its pathway is cell wall biogenesis; peptidoglycan biosynthesis. Cell wall formation. In Bacillus pumilus (strain SAFR-032), this protein is D-alanine--D-alanine ligase.